A 534-amino-acid chain; its full sequence is MWDSPIIFTTMRELVQSVSPAALSWAVVAIYLGTFFWLRSRSSKQRLPLPPGPRGLPLIGNSLQTPAVNPWEKYKEWSDEYGPVMTLSLGLTTTIILSSHQVANDLMEKKSTIYSSRPQLVMFNRLSGGMNSSGMEYGKRWRDHRSLQASVLRPWMTQRYTALRDVETKQLLAELLNTDDFSSCFKRMVASLFMTLAYGKRVQYPDDPEIRGMEELVRVKSEAGEASFRATGQLVEYIPLLQYLPSFLTPWKEMCDRICEQFNKTFVDRLRDGINAPAWTWAKEVSKHKVARPMSELEISYTLGTLYEASLTSQQILRIIVLVAALYPEKTAKAQEELDRVVGTGRLPAAADARNLPYIDAFVKEALRWRPFAPLGAPRESIRDVEYNGYLIPKGATILVNQWALDYNEDMFPEPFSFLPERWVANPNLPFSTFGFGQRGCPGRYFAQDSLFISTARLLWAFNIRTASPVEVEDMLRNPSAGAFLSPIPEFDATFTARDAQRKALIEKEWEISPKESYAILQEVEKELISEGAE.

A helical transmembrane segment spans residues 18–38 (VSPAALSWAVVAIYLGTFFWL). A heme-binding site is contributed by Cys441.

This sequence belongs to the cytochrome P450 family. Heme is required as a cofactor.

Its subcellular location is the membrane. It catalyses the reaction preechinulin + reduced [NADPH--hemoprotein reductase] + O2 = neoechinulin A + oxidized [NADPH--hemoprotein reductase] + 2 H2O + H(+). The protein operates within secondary metabolite biosynthesis. It functions in the pathway alkaloid biosynthesis. Cytochrome P450 monooxygenase; part of the gene cluster that mediates the biosynthesis of echinulin family alkaloid. The pathway begins with the biosynthesis of the cyclic dipeptide cyclo-L-Trp-L-Ala (cyclo-TA) by the NRPS echPS via condensation of L-alanine and L-tryptophan. The prenyltransferase echPT1 then catalyzes the first prenylation step, a reverse prenylation reaction at C2, to yield preechinulin. Preechinulin is the substrate of the cytochrome P450 monooxygenase echP450 that catalyzes the formation of the double bond between C10 and C11 to produce neoechulin A. The unique prenyltransferase echPT2 functions as a competitive enzyme with echP450 for preechinulin metabolization and uses preechinulin for effective regiospecific prenylations. Preechinulin is prenylated by echPT2 at C5 or C7. C7-prenylation leads to accumulation of tardioxopiperazine B without further modification by echPT2. In contrast, the C5-prenylated tardioxopiperazine A can be prenylated again by echPT2, predominantly at C7 to form echinulin or less frequently at C4 to give variecolorin L. EchPT2 also accepts neoechilunin A to produce varlecolorin G (prenylation at C5) or isoechinulin A (prenylation at C7). EchPT2 further converts isoechinulin A into dehydroechinulin. Moreover, a yet unidentified enzyme can also convert neoechilunin A into neoechilunin B by introducing a double bond between positions C14 and C17 and thus provides a further substrate to echPT2 for C5 and C7 prenylation. The polypeptide is Echilunin cytochrome P450 monooxygenase (Aspergillus ruber (strain CBS 135680)).